Here is a 424-residue protein sequence, read N- to C-terminus: UDP-N-acetylglucosamine 1-carboxyvinyltransferase (424 aa).

Residue 22 to 23 participates in phosphoenolpyruvate binding; it reads KN. Residue Arg-93 coordinates UDP-N-acetyl-alpha-D-glucosamine. Catalysis depends on Cys-117, which acts as the Proton donor. The residue at position 117 (Cys-117) is a 2-(S-cysteinyl)pyruvic acid O-phosphothioketal. UDP-N-acetyl-alpha-D-glucosamine is bound by residues 122–126, 162–165, Asp-307, and Ile-329; these read RPVDL and KVSV.

It belongs to the EPSP synthase family. MurA subfamily.

The protein localises to the cytoplasm. The catalysed reaction is phosphoenolpyruvate + UDP-N-acetyl-alpha-D-glucosamine = UDP-N-acetyl-3-O-(1-carboxyvinyl)-alpha-D-glucosamine + phosphate. It functions in the pathway cell wall biogenesis; peptidoglycan biosynthesis. Functionally, cell wall formation. Adds enolpyruvyl to UDP-N-acetylglucosamine. The chain is UDP-N-acetylglucosamine 1-carboxyvinyltransferase from Histophilus somni (strain 129Pt) (Haemophilus somnus).